The primary structure comprises 342 residues: Alternative oxidase, mitochondrial (342 aa).

The N-terminal 20 residues, 1–20 (MIKTYQYRSILNSRNVGIRF), are a transit peptide targeting the mitochondrion. The helical transmembrane segment at 135 to 155 (LTRCIFLESVAGVPGMVAAFI) threads the bilayer. The Fe cation site is built by Glu142, Glu181, and His184. The helical transmembrane segment at 200–220 (FIIYMGQGVFANLFFLVYLIK) threads the bilayer. Fe cation-binding residues include Glu232, Glu287, and His290. Composition is skewed to basic and acidic residues over residues 308–321 (PFALKVEDVPKEQQ) and 330–342 (PHPEGWNREQMRL). Residues 308 to 342 (PFALKVEDVPKEQQPDEYSLKTPHPEGWNREQMRL) are disordered.

It belongs to the alternative oxidase family. Homodimer; disulfide-linked. It depends on Fe cation as a cofactor.

The protein localises to the mitochondrion inner membrane. In terms of biological role, catalyzes cyanide-resistant oxygen consumption. May increase respiration when the cytochrome respiratory pathway is restricted, or in response to low temperatures. This Wickerhamomyces anomalus (Yeast) protein is Alternative oxidase, mitochondrial (AOX1).